The following is a 568-amino-acid chain: DNA mismatch repair protein MutL (568 aa).

Belongs to the DNA mismatch repair MutL/HexB family.

In terms of biological role, this protein is involved in the repair of mismatches in DNA. It is required for dam-dependent methyl-directed DNA mismatch repair. May act as a 'molecular matchmaker', a protein that promotes the formation of a stable complex between two or more DNA-binding proteins in an ATP-dependent manner without itself being part of a final effector complex. This is DNA mismatch repair protein MutL from Nostoc punctiforme (strain ATCC 29133 / PCC 73102).